We begin with the raw amino-acid sequence, 283 residues long: Poly(3-hydroxyalkanoate) depolymerase (283 aa).

An AB hydrolase-1 domain is found at 30 to 253 (PLLIFNGIGA…IDDGHLFLIT (224 aa)). The active-site Charge relay system is Ser102.

It belongs to the AB hydrolase superfamily. Lipase family.

In terms of biological role, complements a mutant that does not degrade PHA; might be a lipase. This is Poly(3-hydroxyalkanoate) depolymerase from Ectopseudomonas oleovorans (Pseudomonas oleovorans).